We begin with the raw amino-acid sequence, 455 residues long: Probable pectate lyase 6 (455 aa).

The N-terminal stretch at 1 to 25 (MVNLGSYVFVFVALSLTVVVPSVQA) is a signal peptide. 2 N-linked (GlcNAc...) asparagine glycosylation sites follow: Asn55 and Asn75. Positions 247, 271, and 275 each coordinate Ca(2+). Arg327 is a catalytic residue.

It belongs to the polysaccharide lyase 1 family. It depends on Ca(2+) as a cofactor.

It catalyses the reaction Eliminative cleavage of (1-&gt;4)-alpha-D-galacturonan to give oligosaccharides with 4-deoxy-alpha-D-galact-4-enuronosyl groups at their non-reducing ends.. It functions in the pathway glycan metabolism; pectin degradation; 2-dehydro-3-deoxy-D-gluconate from pectin: step 2/5. The sequence is that of Probable pectate lyase 6 from Arabidopsis thaliana (Mouse-ear cress).